The following is a 72-amino-acid chain: Translation initiation factor IF-1 (72 aa).

In terms of domain architecture, S1-like spans 1 to 72 (MAKEDSIRMQ…NKGRIVYRER (72 aa)).

This sequence belongs to the IF-1 family. In terms of assembly, component of the 30S ribosomal translation pre-initiation complex which assembles on the 30S ribosome in the order IF-2 and IF-3, IF-1 and N-formylmethionyl-tRNA(fMet); mRNA recruitment can occur at any time during PIC assembly.

It localises to the cytoplasm. Functionally, one of the essential components for the initiation of protein synthesis. Stabilizes the binding of IF-2 and IF-3 on the 30S subunit to which N-formylmethionyl-tRNA(fMet) subsequently binds. Helps modulate mRNA selection, yielding the 30S pre-initiation complex (PIC). Upon addition of the 50S ribosomal subunit IF-1, IF-2 and IF-3 are released leaving the mature 70S translation initiation complex. This Halorhodospira halophila (strain DSM 244 / SL1) (Ectothiorhodospira halophila (strain DSM 244 / SL1)) protein is Translation initiation factor IF-1.